Here is a 285-residue protein sequence, read N- to C-terminus: Foldase protein PrsA 2 (285 aa).

The first 20 residues, 1 to 20, serve as a signal peptide directing secretion; it reads MRGKHIFIITALISILMLAA. Cysteine 21 carries the N-palmitoyl cysteine lipid modification. The S-diacylglycerol cysteine moiety is linked to residue cysteine 21. A PpiC domain is found at 134–224; sequence KPEIKASHIL…NGYHIIKLTG (91 aa).

The protein belongs to the PrsA family.

The protein resides in the cell membrane. The catalysed reaction is [protein]-peptidylproline (omega=180) = [protein]-peptidylproline (omega=0). In terms of biological role, plays a major role in protein secretion by helping the post-translocational extracellular folding of several secreted proteins. Important for the secretion of the protective antigen. The three PsrA proteins in this organism show different but overlapping substrate specificities. The chain is Foldase protein PrsA 2 (prsA2) from Bacillus anthracis.